The chain runs to 318 residues: Olfactory receptor 2T3 (318 aa).

At 1 to 30 (MCSGNQTSQNQTASTDFTLTGLFAESKHAA) the chain is on the extracellular side. N-linked (GlcNAc...) asparagine glycans are attached at residues Asn-5 and Asn-10. A helical transmembrane segment spans residues 31 to 54 (LLYTVTFLLFLMALTGNALLILLI). Residues 55–62 (HSEPRLHT) are Cytoplasmic-facing. Residues 63-84 (PMYFFISQLALMDLMYLCVTVP) form a helical membrane-spanning segment. Over 85 to 105 (KMLVGQVTGDDTISPSGCGIQ) the chain is Extracellular. Residues Cys-102 and Cys-194 are joined by a disulfide bond. Residues 106–125 (MFFYLTLAGAEVFLLAAMAY) form a helical membrane-spanning segment. The Cytoplasmic segment spans residues 126 to 144 (DRYAAVCRPLHYPLLMNQR). The helical transmembrane segment at 145–163 (VCQLLVSACWVLGMVDGLL) threads the bilayer. At 164–200 (LTPITMSFPFCQSRKILSFFCETPALLKLSCSDVSLY) the chain is on the extracellular side. The helical transmembrane segment at 201 to 224 (KTLMYLCCILMLLAPIMVISSSYT) threads the bilayer. Residues 225-241 (LILHLIHRMNSAAGHRK) are Cytoplasmic-facing. Residues 242 to 264 (ALATCSSHMIIVLLLFGASFYTY) traverse the membrane as a helical segment. Over 265–277 (MLPSSYHTAEQDM) the chain is Extracellular. A helical transmembrane segment spans residues 278–297 (MVSAFYTIFTPVLNPLIYSL). The Cytoplasmic segment spans residues 298 to 318 (RNKDVTRALRSMMQSRMNQEK).

This sequence belongs to the G-protein coupled receptor 1 family.

Its subcellular location is the cell membrane. In terms of biological role, odorant receptor. In Homo sapiens (Human), this protein is Olfactory receptor 2T3 (OR2T3).